The primary structure comprises 103 residues: Small ribosomal subunit protein uS10 (103 aa).

This sequence belongs to the universal ribosomal protein uS10 family. In terms of assembly, part of the 30S ribosomal subunit.

In terms of biological role, involved in the binding of tRNA to the ribosomes. The protein is Small ribosomal subunit protein uS10 of Vibrio cholerae serotype O1 (strain ATCC 39541 / Classical Ogawa 395 / O395).